Reading from the N-terminus, the 347-residue chain is 5-formaminoimidazole-4-carboxamide-1-(beta)-D-ribofuranosyl 5'-monophosphate synthetase (347 aa).

5-amino-1-(5-phospho-beta-D-ribosyl)imidazole-4-carboxamide-binding residues include histidine 23 and serine 91. In terms of domain architecture, ATP-grasp spans 112-323 (RKILLWESDQ…YSYLYWDEPM (212 aa)). ATP-binding positions include 142–196 (PDEV…VPAY) and glutamate 218. Residue asparagine 244 coordinates 5-amino-1-(5-phospho-beta-D-ribosyl)imidazole-4-carboxamide. Residues glutamate 283 and glutamate 296 each coordinate Mg(2+).

It belongs to the phosphohexose mutase family. The cofactor is Mg(2+). Requires Mn(2+) as cofactor.

The catalysed reaction is 5-amino-1-(5-phospho-beta-D-ribosyl)imidazole-4-carboxamide + formate + ATP = 5-formamido-1-(5-phospho-D-ribosyl)imidazole-4-carboxamide + ADP + phosphate. Its pathway is purine metabolism; IMP biosynthesis via de novo pathway; 5-formamido-1-(5-phospho-D-ribosyl)imidazole-4-carboxamide from 5-amino-1-(5-phospho-D-ribosyl)imidazole-4-carboxamide (formate route): step 1/1. Functionally, catalyzes the ATP- and formate-dependent formylation of 5-aminoimidazole-4-carboxamide-1-beta-d-ribofuranosyl 5'-monophosphate (AICAR) to 5-formaminoimidazole-4-carboxamide-1-beta-d-ribofuranosyl 5'-monophosphate (FAICAR) in the absence of folates. The chain is 5-formaminoimidazole-4-carboxamide-1-(beta)-D-ribofuranosyl 5'-monophosphate synthetase from Ignicoccus hospitalis (strain KIN4/I / DSM 18386 / JCM 14125).